A 179-amino-acid chain; its full sequence is Large ribosomal subunit protein uL5 (179 aa).

The protein belongs to the universal ribosomal protein uL5 family. Part of the 50S ribosomal subunit; part of the 5S rRNA/L5/L18/L25 subcomplex. Contacts the 5S rRNA and the P site tRNA. Forms a bridge to the 30S subunit in the 70S ribosome.

In terms of biological role, this is one of the proteins that bind and probably mediate the attachment of the 5S RNA into the large ribosomal subunit, where it forms part of the central protuberance. In the 70S ribosome it contacts protein S13 of the 30S subunit (bridge B1b), connecting the 2 subunits; this bridge is implicated in subunit movement. Contacts the P site tRNA; the 5S rRNA and some of its associated proteins might help stabilize positioning of ribosome-bound tRNAs. The polypeptide is Large ribosomal subunit protein uL5 (Prochlorococcus marinus (strain MIT 9313)).